Here is a 401-residue protein sequence, read N- to C-terminus: Inactive (1R,4R,5S)-(-)-guaia-6,10(14)-diene synthase (401 aa).

Residues 1 to 20 (MVKFDSGSESEMTNGDELHI) are disordered. Residues aspartate 134 and glutamate 139 each coordinate Mg(2+). The short motif at 134–138 (DDQFD) is the DDXXD motif element. Residue arginine 242 participates in substrate binding. Serine 292 is a Mg(2+) binding site. Residue lysine 295 participates in substrate binding. Position 296 (aspartate 296) interacts with Mg(2+). Position 375-376 (375-376 (RY)) interacts with substrate.

The protein belongs to the terpene synthase family. It depends on Mg(2+) as a cofactor.

The protein is Inactive (1R,4R,5S)-(-)-guaia-6,10(14)-diene synthase of Gibberella fujikuroi (strain CBS 195.34 / IMI 58289 / NRRL A-6831) (Bakanae and foot rot disease fungus).